A 437-amino-acid polypeptide reads, in one-letter code: UDP-N-acetylmuramate--L-alanine ligase (437 aa).

108-114 (GAHGKTS) contributes to the ATP binding site.

It belongs to the MurCDEF family.

It is found in the cytoplasm. It carries out the reaction UDP-N-acetyl-alpha-D-muramate + L-alanine + ATP = UDP-N-acetyl-alpha-D-muramoyl-L-alanine + ADP + phosphate + H(+). It participates in cell wall biogenesis; peptidoglycan biosynthesis. Cell wall formation. The protein is UDP-N-acetylmuramate--L-alanine ligase of Staphylococcus aureus (strain MRSA252).